Reading from the N-terminus, the 125-residue chain is Large ribosomal subunit protein uL30 (125 aa).

The segment at 1–61 (MSKLKVKLLR…HLVGVAYRID (61 aa)) is large ribosomal subunit protein uL30. The interval 62 to 125 (FSGDIPTVER…KNWKGEEVEL (64 aa)) is unknown.

It belongs to the universal ribosomal protein uL30 family. As to quaternary structure, part of the 50S ribosomal subunit.

The protein is Large ribosomal subunit protein uL30 of Aquifex aeolicus (strain VF5).